The primary structure comprises 828 residues: Translation initiation factor IF-2 (828 aa).

Disordered regions lie at residues 48 to 76 (SYSG…SEEF) and 112 to 137 (ASQE…EPKI). Polar residues predominate over residues 49–58 (YSGSTTTLSL). A compositionally biased stretch (low complexity) spans 65-74 (LETGSSSGSE). Acidic residues predominate over residues 116–126 (DPIEVEQEESS). A compositionally biased stretch (basic and acidic residues) spans 127-137 (DTNKVKEEPKI). A tr-type G domain is found at 326–496 (SRAPVVTVMG…LLIAEMQNLK (171 aa)). The segment at 335-342 (GHVDHGKT) is G1. 335-342 (GHVDHGKT) lines the GTP pocket. Positions 360-364 (GITQH) are G2. A G3 region spans residues 382–385 (DTPG). GTP contacts are provided by residues 382 to 386 (DTPGH) and 436 to 439 (NKID). A G4 region spans residues 436 to 439 (NKID). A G5 region spans residues 472–474 (SAL).

It belongs to the TRAFAC class translation factor GTPase superfamily. Classic translation factor GTPase family. IF-2 subfamily.

Its subcellular location is the cytoplasm. In terms of biological role, one of the essential components for the initiation of protein synthesis. Protects formylmethionyl-tRNA from spontaneous hydrolysis and promotes its binding to the 30S ribosomal subunits. Also involved in the hydrolysis of GTP during the formation of the 70S ribosomal complex. This chain is Translation initiation factor IF-2, found in Rickettsia bellii (strain RML369-C).